The sequence spans 206 residues: Inner membrane-spanning protein YciB (206 aa).

5 helical membrane-spanning segments follow: residues Ile22–Phe42, Met50–Asp70, Trp76–Gly96, Ile118–Phe138, and Phe148–Ile168. A compositionally biased stretch (basic and acidic residues) spans Leu178–Glu189. Residues Leu178–Lys206 form a disordered region. Over residues Gln191–Lys206 the composition is skewed to polar residues.

This sequence belongs to the YciB family.

The protein localises to the cell inner membrane. Functionally, plays a role in cell envelope biogenesis, maintenance of cell envelope integrity and membrane homeostasis. The sequence is that of Inner membrane-spanning protein YciB from Vibrio atlanticus (strain LGP32) (Vibrio splendidus (strain Mel32)).